The sequence spans 278 residues: Large ribosomal subunit protein uL2c (278 aa).

Residues 224–256 (NPVDHPHGGGEGRAPIGRKKPTTPWGYPALGRK) are disordered.

It belongs to the universal ribosomal protein uL2 family. Part of the 50S ribosomal subunit.

It localises to the plastid. The polypeptide is Large ribosomal subunit protein uL2c (rpl2) (Cuscuta exaltata (Tall dodder)).